The following is a 371-amino-acid chain: tRNA/tmRNA (uracil-C(5))-methyltransferase (371 aa).

Residues Gln194, Tyr223, Asn228, Glu244, and Asp304 each contribute to the S-adenosyl-L-methionine site. Cys329 acts as the Nucleophile in catalysis. The active-site Proton acceptor is Glu363.

It belongs to the class I-like SAM-binding methyltransferase superfamily. RNA M5U methyltransferase family. TrmA subfamily.

It catalyses the reaction uridine(54) in tRNA + S-adenosyl-L-methionine = 5-methyluridine(54) in tRNA + S-adenosyl-L-homocysteine + H(+). The catalysed reaction is uridine(341) in tmRNA + S-adenosyl-L-methionine = 5-methyluridine(341) in tmRNA + S-adenosyl-L-homocysteine + H(+). Dual-specificity methyltransferase that catalyzes the formation of 5-methyluridine at position 54 (m5U54) in all tRNAs, and that of position 341 (m5U341) in tmRNA (transfer-mRNA). This chain is tRNA/tmRNA (uracil-C(5))-methyltransferase, found in Sulfurovum sp. (strain NBC37-1).